The chain runs to 632 residues: tRNA uridine 5-carboxymethylaminomethyl modification enzyme MnmG (632 aa).

FAD is bound by residues 15–20, I127, and S182; that span reads GAGHAG. 276-290 contributes to the NAD(+) binding site; it reads GPRYCPSIEDKIVRF. Q373 is an FAD binding site.

It belongs to the MnmG family. In terms of assembly, homodimer. Heterotetramer of two MnmE and two MnmG subunits. The cofactor is FAD.

It localises to the cytoplasm. Its function is as follows. NAD-binding protein involved in the addition of a carboxymethylaminomethyl (cmnm) group at the wobble position (U34) of certain tRNAs, forming tRNA-cmnm(5)s(2)U34. In Streptococcus pyogenes serotype M3 (strain SSI-1), this protein is tRNA uridine 5-carboxymethylaminomethyl modification enzyme MnmG.